Consider the following 119-residue polypeptide: Large ribosomal subunit protein bL20 (119 aa).

This sequence belongs to the bacterial ribosomal protein bL20 family.

In terms of biological role, binds directly to 23S ribosomal RNA and is necessary for the in vitro assembly process of the 50S ribosomal subunit. It is not involved in the protein synthesizing functions of that subunit. This chain is Large ribosomal subunit protein bL20, found in Clostridium tetani (strain Massachusetts / E88).